The chain runs to 361 residues: Peptide chain release factor 1 (361 aa).

An N5-methylglutamine modification is found at Gln-237. Positions 285–296 (DEKRRSAEESTR) are enriched in basic and acidic residues. Residues 285-305 (DEKRRSAEESTRRNLVSSGDR) form a disordered region.

This sequence belongs to the prokaryotic/mitochondrial release factor family. Post-translationally, methylated by PrmC. Methylation increases the termination efficiency of RF1.

The protein localises to the cytoplasm. In terms of biological role, peptide chain release factor 1 directs the termination of translation in response to the peptide chain termination codons UAG and UAA. The sequence is that of Peptide chain release factor 1 from Shewanella halifaxensis (strain HAW-EB4).